A 265-amino-acid polypeptide reads, in one-letter code: Very long chain fatty acid elongase 6 (265 aa).

An N-linked (GlcNAc...) asparagine glycan is attached at Asn2. Transmembrane regions (helical) follow at residues 34-51 (FLFS…RHLM), 70-90 (LAVF…YILM), 111-131 (FWAY…IFII), 137-156 (LIFL…WYSY), 159-179 (MVAG…VMYS), 197-217 (FITL…YLVF), and 232-252 (IIWS…FFFE).

Belongs to the ELO family. ELOVL6 subfamily. N-Glycosylated.

The protein localises to the endoplasmic reticulum membrane. It catalyses the reaction a very-long-chain acyl-CoA + malonyl-CoA + H(+) = a very-long-chain 3-oxoacyl-CoA + CO2 + CoA. The catalysed reaction is hexadecanoyl-CoA + malonyl-CoA + H(+) = 3-oxooctadecanoyl-CoA + CO2 + CoA. It carries out the reaction (9Z)-hexadecenoyl-CoA + malonyl-CoA + H(+) = 3-oxo-(11Z)-octadecenoyl-CoA + CO2 + CoA. The enzyme catalyses dodecanoyl-CoA + malonyl-CoA + H(+) = 3-oxotetradecanoyl-CoA + CO2 + CoA. It catalyses the reaction tetradecanoyl-CoA + malonyl-CoA + H(+) = 3-oxohexadecanoyl-CoA + CO2 + CoA. The catalysed reaction is (9Z)-octadecenoyl-CoA + malonyl-CoA + H(+) = 3-oxo-(11Z)-eicosenoyl-CoA + CO2 + CoA. It carries out the reaction (9Z,12Z)-octadecadienoyl-CoA + malonyl-CoA + H(+) = (11Z,14Z)-3-oxoicosa-11,14-dienoyl-CoA + CO2 + CoA. The enzyme catalyses (9Z,12Z,15Z)-octadecatrienoyl-CoA + malonyl-CoA + H(+) = (11Z,14Z,17Z)-3-oxoeicosatrienoyl-CoA + CO2 + CoA. The protein operates within lipid metabolism; fatty acid biosynthesis. With respect to regulation, the reaction is stimulated by the presence of HSD17B12, the enzyme catalyzing the second step of the elongation cycle. Its function is as follows. Catalyzes the first and rate-limiting reaction of the four reactions that constitute the long-chain fatty acids elongation cycle. This endoplasmic reticulum-bound enzymatic process allows the addition of 2 carbons to the chain of long- and very long-chain fatty acids (VLCFAs) per cycle. Condensing enzyme that elongates fatty acids with 12, 14 and 16 carbons with higher activity toward C16:0 acyl-CoAs. Catalyzes the synthesis of unsaturated C16 long chain fatty acids and, to a lesser extent, C18:0 and those with low desaturation degree. May participate in the production of saturated and monounsaturated VLCFAs of different chain lengths that are involved in multiple biological processes as precursors of membrane lipids and lipid mediators. In Gallus gallus (Chicken), this protein is Very long chain fatty acid elongase 6.